A 484-amino-acid chain; its full sequence is Glutamate--tRNA ligase (484 aa).

The short motif at 11–21 (PSPTGYLHIGN) is the 'HIGH' region element. The 'KMSKS' region motif lies at 252 to 256 (KLSKR). Lys-255 contacts ATP.

It belongs to the class-I aminoacyl-tRNA synthetase family. Glutamate--tRNA ligase type 1 subfamily. Monomer.

The protein localises to the cytoplasm. It carries out the reaction tRNA(Glu) + L-glutamate + ATP = L-glutamyl-tRNA(Glu) + AMP + diphosphate. Its function is as follows. Catalyzes the attachment of glutamate to tRNA(Glu) in a two-step reaction: glutamate is first activated by ATP to form Glu-AMP and then transferred to the acceptor end of tRNA(Glu). The sequence is that of Glutamate--tRNA ligase from Staphylococcus aureus (strain Mu3 / ATCC 700698).